Here is a 150-residue protein sequence, read N- to C-terminus: Endoribonuclease YbeY (150 aa).

Residues histidine 112, histidine 116, and histidine 122 each coordinate Zn(2+).

This sequence belongs to the endoribonuclease YbeY family. The cofactor is Zn(2+).

The protein localises to the cytoplasm. Single strand-specific metallo-endoribonuclease involved in late-stage 70S ribosome quality control and in maturation of the 3' terminus of the 16S rRNA. In Geobacter sulfurreducens (strain ATCC 51573 / DSM 12127 / PCA), this protein is Endoribonuclease YbeY.